A 93-amino-acid chain; its full sequence is Large ribosomal subunit protein eL42 (93 aa).

Zn(2+) contacts are provided by cysteine 11 and cysteine 14. The C4-type zinc-finger motif lies at 11–75 (CPNCDEHHQL…TDLKYRCSEC (65 aa)). Positions 24 to 62 (KVRSGRSSGMKWDARRTKRANASIGNHGRFSKVPVGNKP) are disordered. Zn(2+) contacts are provided by cysteine 72 and cysteine 75.

It belongs to the eukaryotic ribosomal protein eL42 family. Part of the 50S ribosomal subunit. Zn(2+) is required as a cofactor.

In terms of biological role, binds to the 23S rRNA. This is Large ribosomal subunit protein eL42 from Halobacterium salinarum (strain ATCC 700922 / JCM 11081 / NRC-1) (Halobacterium halobium).